The sequence spans 690 residues: Highly divergent homeobox (690 aa).

The segment at residues 3–63 (LRSVFTVEQQ…NKRRKMSSKN (61 aa)) is a DNA-binding region (homeobox 1). Disordered stretches follow at residues 55–76 (KRRKMSSKNSESGTATTGTSLS) and 112–132 (SPASSSSRQGTNKHTDTQITE). The segment covering 64 to 76 (SESGTATTGTSLS) has biased composition (low complexity). The span at 113–123 (PASSSSRQGTN) shows a compositional bias: polar residues. Glycyl lysine isopeptide (Lys-Gly) (interchain with G-Cter in SUMO2) cross-links involve residues Lys-135, Lys-140, Lys-144, Lys-163, Lys-172, Lys-194, Lys-212, Lys-221, and Lys-232. A DNA-binding region (homeobox 2) is located at residues 435–498 (ALQDRTQFSD…NRRRKYRLMG (64 aa)). The tract at residues 501–539 (VPPPRGGPADFSEQPESGSLSALTPGEEAGPEVGEDNDR) is disordered. Lys-613 participates in a covalent cross-link: Glycyl lysine isopeptide (Lys-Gly) (interchain with G-Cter in SUMO2). The segment at 664 to 690 (FNHASLEPDDTSFSVSSLSEKNVSESL) is disordered. A compositionally biased stretch (polar residues) spans 674–690 (TSFSVSSLSEKNVSESL).

Its subcellular location is the nucleus. This chain is Highly divergent homeobox (HDX), found in Homo sapiens (Human).